Here is a 448-residue protein sequence, read N- to C-terminus: Probable glycine dehydrogenase (decarboxylating) subunit 1 (448 aa).

The protein belongs to the GcvP family. N-terminal subunit subfamily. In terms of assembly, the glycine cleavage system is composed of four proteins: P, T, L and H. In this organism, the P 'protein' is a heterodimer of two subunits.

The catalysed reaction is N(6)-[(R)-lipoyl]-L-lysyl-[glycine-cleavage complex H protein] + glycine + H(+) = N(6)-[(R)-S(8)-aminomethyldihydrolipoyl]-L-lysyl-[glycine-cleavage complex H protein] + CO2. In terms of biological role, the glycine cleavage system catalyzes the degradation of glycine. The P protein binds the alpha-amino group of glycine through its pyridoxal phosphate cofactor; CO(2) is released and the remaining methylamine moiety is then transferred to the lipoamide cofactor of the H protein. The chain is Probable glycine dehydrogenase (decarboxylating) subunit 1 from Anoxybacillus flavithermus (strain DSM 21510 / WK1).